We begin with the raw amino-acid sequence, 345 residues long: Phosphoribosylformylglycinamidine cyclo-ligase (345 aa).

It belongs to the AIR synthase family.

The protein localises to the cytoplasm. The enzyme catalyses 2-formamido-N(1)-(5-O-phospho-beta-D-ribosyl)acetamidine + ATP = 5-amino-1-(5-phospho-beta-D-ribosyl)imidazole + ADP + phosphate + H(+). It participates in purine metabolism; IMP biosynthesis via de novo pathway; 5-amino-1-(5-phospho-D-ribosyl)imidazole from N(2)-formyl-N(1)-(5-phospho-D-ribosyl)glycinamide: step 2/2. This is Phosphoribosylformylglycinamidine cyclo-ligase from Aeromonas salmonicida (strain A449).